A 72-amino-acid polypeptide reads, in one-letter code: UPF0352 protein CGSHiGG_07710 (72 aa).

Belongs to the UPF0352 family.

The protein is UPF0352 protein CGSHiGG_07710 of Haemophilus influenzae (strain PittGG).